A 506-amino-acid chain; its full sequence is Probable malate:quinone oxidoreductase (506 aa).

The protein belongs to the MQO family. It depends on FAD as a cofactor.

It carries out the reaction (S)-malate + a quinone = a quinol + oxaloacetate. The protein operates within carbohydrate metabolism; tricarboxylic acid cycle; oxaloacetate from (S)-malate (quinone route): step 1/1. This chain is Probable malate:quinone oxidoreductase, found in Rhodococcus jostii (strain RHA1).